The primary structure comprises 201 residues: Glycerol-3-phosphate acyltransferase (201 aa).

The next 5 membrane-spanning stretches (helical) occupy residues 5–25 (LLGALLVAAGYLAGSIPFGVV), 55–75 (KMGVLVLVLDAAKAIVPILVA), 88–108 (WVTAVAVAAFVGHLFPVWLGF), 118–138 (LGIFAVLAPWAALAGLVGYAV), and 164–184 (TYGPRHPISWAGLAIALLIFL).

It belongs to the PlsY family. In terms of assembly, probably interacts with PlsX.

The protein localises to the cell inner membrane. It carries out the reaction an acyl phosphate + sn-glycerol 3-phosphate = a 1-acyl-sn-glycero-3-phosphate + phosphate. It functions in the pathway lipid metabolism; phospholipid metabolism. Functionally, catalyzes the transfer of an acyl group from acyl-phosphate (acyl-PO(4)) to glycerol-3-phosphate (G3P) to form lysophosphatidic acid (LPA). This enzyme utilizes acyl-phosphate as fatty acyl donor, but not acyl-CoA or acyl-ACP. The sequence is that of Glycerol-3-phosphate acyltransferase from Anaeromyxobacter sp. (strain K).